Reading from the N-terminus, the 233-residue chain is MQIQNSIRATLESNHGLLDVDYVANLLENLLRTWKHGKPTIKVREAIQLAHAKSIKVISLWPQETCSFRNFDGNPEDDPNVPWLVRRENSSGPFTQPGSETSSLEQLLNGLGCIARILRENTNTVEARRAIDDHFCKIKKPAKLTMVGIQNIKKSMKRLLVNMSPIEGLEELFFQARSLGVPSHLVESVRPPVDIHSGNMHRTGISPRKRTLPEPFDESNTISHRRTRRNTKQ.

The segment at 195–233 (IHSGNMHRTGISPRKRTLPEPFDESNTISHRRTRRNTKQ) is disordered. A compositionally biased stretch (basic residues) spans 223–233 (SHRRTRRNTKQ).

Functionally, plasmid partition require REP1, REP2, and a cis-acting DNA sequence (known as STB). The protein is Trans-acting factor C (S) of Zygosaccharomyces rouxii.